A 582-amino-acid chain; its full sequence is Probable DNA ligase (582 aa).

Glu248 provides a ligand contact to ATP. Lys250 (N6-AMP-lysine intermediate) is an active-site residue. Residues Arg255, Arg270, Glu299, Phe339, Arg416, and Lys422 each coordinate ATP.

The protein belongs to the ATP-dependent DNA ligase family. It depends on Mg(2+) as a cofactor.

It carries out the reaction ATP + (deoxyribonucleotide)n-3'-hydroxyl + 5'-phospho-(deoxyribonucleotide)m = (deoxyribonucleotide)n+m + AMP + diphosphate.. Its function is as follows. DNA ligase that seals nicks in double-stranded DNA during DNA replication, DNA recombination and DNA repair. This is Probable DNA ligase from Persephonella marina (strain DSM 14350 / EX-H1).